We begin with the raw amino-acid sequence, 1129 residues long: Phytochrome A type 3 (1129 aa).

Residues 1-21 (MSSSRPASSSSSRNRQSSQAR) are compositionally biased toward low complexity. The segment at 1-24 (MSSSRPASSSSSRNRQSSQARVLA) is disordered. The GAF domain occupies 217 to 402 (SMEVLCNTVV…VFAVHVNREF (186 aa)). Cys-322 serves as a coordination point for phytochromobilin. 2 consecutive PAS domains span residues 618 to 688 (VTSE…LQGK) and 748 to 822 (VEGD…VSLC). Residues 902–1122 (YMRHAINNPL…TFIITAELAS (221 aa)) enclose the Histidine kinase domain.

It belongs to the phytochrome family. Homodimer. Contains one covalently linked phytochromobilin chromophore.

In terms of biological role, regulatory photoreceptor which exists in two forms that are reversibly interconvertible by light: the Pr form that absorbs maximally in the red region of the spectrum and the Pfr form that absorbs maximally in the far-red region. Photoconversion of Pr to Pfr induces an array of morphogenic responses, whereas reconversion of Pfr to Pr cancels the induction of those responses. Pfr controls the expression of a number of nuclear genes including those encoding the small subunit of ribulose-bisphosphate carboxylase, chlorophyll A/B binding protein, protochlorophyllide reductase, rRNA, etc. It also controls the expression of its own gene(s) in a negative feedback fashion. This is Phytochrome A type 3 (PHYA3) from Avena sativa (Oat).